A 235-amino-acid chain; its full sequence is Flagellar L-ring protein (235 aa).

Residues 1–18 (MNKIAGTLFLLAGLAMAG) form the signal peptide. Cysteine 19 is lipidated: N-palmitoyl cysteine. Residue cysteine 19 is the site of S-diacylglycerol cysteine attachment.

This sequence belongs to the FlgH family. In terms of assembly, the basal body constitutes a major portion of the flagellar organelle and consists of four rings (L,P,S, and M) mounted on a central rod.

Its subcellular location is the cell outer membrane. It localises to the bacterial flagellum basal body. Assembles around the rod to form the L-ring and probably protects the motor/basal body from shearing forces during rotation. This is Flagellar L-ring protein from Chelativorans sp. (strain BNC1).